Here is a 359-residue protein sequence, read N- to C-terminus: Alanine racemase (359 aa).

The active-site Proton acceptor; specific for D-alanine is Lys34. Position 34 is an N6-(pyridoxal phosphate)lysine (Lys34). Arg129 is a substrate binding site. The Proton acceptor; specific for L-alanine role is filled by Tyr254. Met302 is a substrate binding site.

The protein belongs to the alanine racemase family. Pyridoxal 5'-phosphate is required as a cofactor.

It carries out the reaction L-alanine = D-alanine. It participates in amino-acid biosynthesis; D-alanine biosynthesis; D-alanine from L-alanine: step 1/1. Catalyzes the interconversion of L-alanine and D-alanine. May also act on other amino acids. This chain is Alanine racemase (alr), found in Yersinia pestis.